The following is a 301-amino-acid chain: tRNA dimethylallyltransferase (301 aa).

ATP is bound at residue 12-19; the sequence is GPTAVGKT. 14 to 19 contributes to the substrate binding site; sequence TAVGKT. Positions 37–40 are interaction with substrate tRNA; that stretch reads DSQQ.

This sequence belongs to the IPP transferase family. Monomer. Mg(2+) is required as a cofactor.

The enzyme catalyses adenosine(37) in tRNA + dimethylallyl diphosphate = N(6)-dimethylallyladenosine(37) in tRNA + diphosphate. Its function is as follows. Catalyzes the transfer of a dimethylallyl group onto the adenine at position 37 in tRNAs that read codons beginning with uridine, leading to the formation of N6-(dimethylallyl)adenosine (i(6)A). This chain is tRNA dimethylallyltransferase, found in Streptococcus uberis (strain ATCC BAA-854 / 0140J).